The sequence spans 793 residues: Putative potassium transporter 12 (793 aa).

Over 1 to 54 (MASISDSETTNHGSIWDLDQNLDQPMDEEASRLKNMYTEKKFSSILLLRLAFQS) the chain is Cytoplasmic. The chain crosses the membrane as a helical span at residues 55 to 75 (LGVVFGDLGTSPLYVFYNIFP). Residues 76–87 (HGVDDDEDVIGA) lie on the Extracellular side of the membrane. A helical transmembrane segment spans residues 88-108 (LSLIIYTLTLIPLMKYVFVVL). Topologically, residues 109 to 175 (RANDNGQGGT…EGHVYKKNCL (67 aa)) are cytoplasmic. Residues 176 to 196 (LILVLIGTCTAIGDGILTPAI) form a helical membrane-spanning segment. Residues 197-215 (SVLSASGGIRVQNQKMSTD) are Extracellular-facing. The helical transmembrane segment at 216–236 (VVVVVAVIILIGLFSMQHYGT) threads the bilayer. The Cytoplasmic segment spans residues 237–238 (DK). A helical transmembrane segment spans residues 239–259 (VGWLFAPIVLLWFILIGTIGA). Residues 260–289 (LNIHKYNSSVLKAYNPVYIYRYFRRGKSES) lie on the Extracellular side of the membrane. N-linked (GlcNAc...) asparagine glycosylation occurs at asparagine 266. Residues 290 to 310 (WTSLGGIMLSITGTEALYADL) form a helical membrane-spanning segment. The Cytoplasmic portion of the chain corresponds to 311–315 (CHFPV). The chain crosses the membrane as a helical span at residues 316–338 (LAIQIAFTLVVFPCLLLAYTGQA). The Extracellular segment spans residues 339–359 (AYIISNKDHVVDAFYRSIPDT). A helical transmembrane segment spans residues 360–380 (IYWPVFIIATLAAIVASQATI). Residues 381-411 (SATYSIIKQALALGCFPRVSVVHTSKKFLGQ) are Cytoplasmic-facing. The helical transmembrane segment at 412–432 (IYIPDINWVLMILCIAVTAGF) threads the bilayer. The Extracellular portion of the chain corresponds to 433–444 (KNQSQIGNAYGT). Asparagine 434 is a glycosylation site (N-linked (GlcNAc...) asparagine). A helical transmembrane segment spans residues 445–465 (AVVIVMLVTTFLMVPIMLLVW). The Cytoplasmic portion of the chain corresponds to 466-468 (KSH). The chain crosses the membrane as a helical span at residues 469–489 (WILVVIFIVLSLMVELPYFTA). Residues 490–496 (CINKVDQ) are Extracellular-facing. The helical transmembrane segment at 497 to 517 (GGWVPLVVATTCFIIMYVWHF) threads the bilayer. The Cytoplasmic segment spans residues 518–793 (CTVKRYEFEM…LLNVGQIYYI (276 aa)).

The protein belongs to the HAK/KUP transporter (TC 2.A.72.3) family.

It localises to the membrane. Its function is as follows. High-affinity potassium transporter. This is Putative potassium transporter 12 (HAK12) from Oryza sativa subsp. japonica (Rice).